The following is a 322-amino-acid chain: NADH-quinone oxidoreductase subunit H (322 aa).

A run of 8 helical transmembrane segments spans residues 12–32 (IGKA…MSFI), 79–99 (IFVL…AVVP), 111–131 (VGLL…LFAG), 151–171 (LSYE…TGSF), 183–203 (LWNV…GVAV), 234–254 (FFVG…TLFF), 262–282 (LPPF…FILL), and 301–321 (VCLP…LMNA).

This sequence belongs to the complex I subunit 1 family. In terms of assembly, NDH-1 is composed of 14 different subunits. Subunits NuoA, H, J, K, L, M, N constitute the membrane sector of the complex.

The protein resides in the cell inner membrane. It carries out the reaction a quinone + NADH + 5 H(+)(in) = a quinol + NAD(+) + 4 H(+)(out). Its function is as follows. NDH-1 shuttles electrons from NADH, via FMN and iron-sulfur (Fe-S) centers, to quinones in the respiratory chain. The immediate electron acceptor for the enzyme in this species is believed to be ubiquinone. Couples the redox reaction to proton translocation (for every two electrons transferred, four hydrogen ions are translocated across the cytoplasmic membrane), and thus conserves the redox energy in a proton gradient. This subunit may bind ubiquinone. This chain is NADH-quinone oxidoreductase subunit H, found in Aeromonas hydrophila subsp. hydrophila (strain ATCC 7966 / DSM 30187 / BCRC 13018 / CCUG 14551 / JCM 1027 / KCTC 2358 / NCIMB 9240 / NCTC 8049).